Here is a 283-residue protein sequence, read N- to C-terminus: Gap junction alpha-6 protein (283 aa).

Residues 1-23 (MSDWSALHQLLEKVQPYSTAGGK) are Cytoplasmic-facing. A helical transmembrane segment spans residues 24 to 41 (VWIKVLFIFRILLLGTAI). The Extracellular portion of the chain corresponds to 42–76 (ESAWSDEQFEFHCNTQQPGCENVCYDHAFPISHVR). A helical transmembrane segment spans residues 77–99 (LWVLQVIFVSVPILLYLAHVYYV). Over 100-150 (VRQNKKLNKQEEELEAAHFNEASVERHLETIAGEQFKCGSEEQSKVKMRGR) the chain is Cytoplasmic. The helical transmembrane segment at 151 to 173 (LLLTYMASIFFKSVFEMAFLLIQ) threads the bilayer. Over 174–208 (WYIYGFTLSALYICEQSPCPRRVDCFLSRPTEKTI) the chain is Extracellular. The chain crosses the membrane as a helical span at residues 209 to 231 (FILFMFVVSVVSFVLDIIELFYV). The Cytoplasmic portion of the chain corresponds to 232 to 283 (LFKAIKNRMRKAEDEVYCDELPCPSHVSSSTVLTTIDSSEQAVPVELSSVCI).

It belongs to the connexin family. Alpha-type (group II) subfamily. A connexon is composed of a hexamer of connexins.

The protein resides in the cell membrane. Its subcellular location is the cell junction. It localises to the gap junction. In terms of biological role, one gap junction consists of a cluster of closely packed pairs of transmembrane channels, the connexons, through which materials of low MW diffuse from one cell to a neighboring cell. The protein is Gap junction alpha-6 protein (Gja6) of Mus musculus (Mouse).